The chain runs to 225 residues: DNA repair and recombination protein RadB (225 aa).

The protein belongs to the eukaryotic RecA-like protein family. RadB subfamily.

Involved in DNA repair and in homologous recombination. May regulate the cleavage reactions of the branch-structured DNA. Has a very weak ATPase activity that is not stimulated by DNA. Binds DNA but does not promote DNA strands exchange. The sequence is that of DNA repair and recombination protein RadB from Methanococcoides burtonii (strain DSM 6242 / NBRC 107633 / OCM 468 / ACE-M).